A 745-amino-acid polypeptide reads, in one-letter code: Interleukin-17 receptor D (745 aa).

Positions 1-26 (MAGSRRLAHFFMASCLFLCYTASVNG) are cleaved as a signal peptide. The Extracellular portion of the chain corresponds to 27–298 (GKRGNSDKCS…VHSPWAGPIR (272 aa)). 6 N-linked (GlcNAc...) asparagine glycosylation sites follow: N61, N79, N136, N170, N205, and N276. The chain crosses the membrane as a helical span at residues 299-319 (AMAITVPLVIMSAFATLFTVM). Residues 320–745 (CRKKQQENIY…SEGLIAAAST (426 aa)) are Cytoplasmic-facing. In terms of domain architecture, SEFIR spans 354 to 518 (RPKIFICYSS…LMDQLPQLFA (165 aa)). 2 disordered regions span residues 432–454 (RHRK…DSSS) and 631–713 (REDL…PPAV). Positions 439 to 448 (TSKEKNREPS) are enriched in basic and acidic residues. The span at 693–705 (SSLADSVSSSSGL) shows a compositional bias: low complexity.

In terms of assembly, interacts with fgfr1 and fgfr2.

The protein resides in the membrane. Functionally, feedback inhibitor of fibroblast growth factor mediated Ras-MAPK signaling and ERK activation. May inhibit FGF-induced FGFR1 tyrosine phosphorylation. In Danio rerio (Zebrafish), this protein is Interleukin-17 receptor D (il17rd).